A 226-amino-acid chain; its full sequence is RNA annealing protein YRA1 (226 aa).

Positions 1-62 are disordered; the sequence is MSANLDKSLD…PIRKNTRAPP (62 aa). An N-acetylserine modification is found at Ser2. Ser8 and Ser100 each carry phosphoserine. The 81-residue stretch at 78–158 folds into the RRM domain; it reads VKVNVEGLPR…SRLRLNLIVD (81 aa). The segment at 173–226 is disordered; it reads AMPQKGGNAPRPVKRGPNRKAAMAKSQNKPKREKPAKKSLEDLDKEMADYFEKK. Positions 208-226 are enriched in basic and acidic residues; it reads AKKSLEDLDKEMADYFEKK.

As to quaternary structure, component of the transcription/export (TREX) complex, which is at least is formed of SUB2, TEX1 and YRA1 and the THO complex composed of HPR1, MFT1, THO2 and THP1. Interacts with RDS3 and YRA2.

It is found in the nucleus. Its function is as follows. RNA-binding RNA annealing protein. May have a role in pre-mRNA metabolism. Component the TREX complex, which operates in coupling transcription elongation to mRNA export. The chain is RNA annealing protein YRA1 (YRA1) from Saccharomyces cerevisiae (strain ATCC 204508 / S288c) (Baker's yeast).